The sequence spans 328 residues: Malate dehydrogenase (328 aa).

11–17 (GAAGQIG) lines the NAD(+) pocket. Arginine 94 and arginine 100 together coordinate substrate. NAD(+) contacts are provided by residues asparagine 107, glutamine 114, and 131-133 (VGN). The substrate site is built by asparagine 133 and arginine 164. Catalysis depends on histidine 189, which acts as the Proton acceptor.

It belongs to the LDH/MDH superfamily. MDH type 2 family.

The catalysed reaction is (S)-malate + NAD(+) = oxaloacetate + NADH + H(+). In terms of biological role, catalyzes the reversible oxidation of malate to oxaloacetate. The protein is Malate dehydrogenase of Stenotrophomonas maltophilia (strain R551-3).